The following is a 388-amino-acid chain: Leucine aminopeptidase 1 (388 aa).

The N-terminal stretch at 1–19 (MKVLTAIALSAIAFTGAVA) is a signal peptide. Residues 20-88 (AVITQEAFLN…YPTLHSASYV (69 aa)) constitute a propeptide that is removed on maturation. N-linked (GlcNAc...) asparagine glycans are attached at residues Asn106 and Asn180. Residues His188 and Asp207 each contribute to the Zn(2+) site. Asn232 is a glycosylation site (N-linked (GlcNAc...) asparagine). The Zn(2+) site is built by Glu246 and Asp273. Cys322 and Cys326 form a disulfide bridge. Residue His355 coordinates Zn(2+).

Belongs to the peptidase M28 family. M28E subfamily. In terms of assembly, monomer. Requires Zn(2+) as cofactor.

The protein localises to the secreted. Functionally, extracellular aminopeptidase that allows assimilation of proteinaceous substrates and which contributes to pathogenicity. The protein is Leucine aminopeptidase 1 (lap1) of Aspergillus fumigatus (strain CBS 144.89 / FGSC A1163 / CEA10) (Neosartorya fumigata).